Here is a 120-residue protein sequence, read N- to C-terminus: NAD(P)H-quinone oxidoreductase subunit 3 (120 aa).

3 helical membrane-spanning segments follow: residues 10 to 32 (LLGFLLLCSLVPALALSASKVLR), 64 to 84 (MFALVFVIFDVETVFLYPWAV), and 89 to 109 (LGVLAFIEALIFIAILIVGLV).

It belongs to the complex I subunit 3 family. NDH-1 can be composed of about 15 different subunits; different subcomplexes with different compositions have been identified which probably have different functions.

The protein localises to the cellular thylakoid membrane. It carries out the reaction a plastoquinone + NADH + (n+1) H(+)(in) = a plastoquinol + NAD(+) + n H(+)(out). The enzyme catalyses a plastoquinone + NADPH + (n+1) H(+)(in) = a plastoquinol + NADP(+) + n H(+)(out). Its function is as follows. NDH-1 shuttles electrons from an unknown electron donor, via FMN and iron-sulfur (Fe-S) centers, to quinones in the respiratory and/or the photosynthetic chain. The immediate electron acceptor for the enzyme in this species is believed to be plastoquinone. Couples the redox reaction to proton translocation, and thus conserves the redox energy in a proton gradient. Cyanobacterial NDH-1 also plays a role in inorganic carbon-concentration. In Acaryochloris marina (strain MBIC 11017), this protein is NAD(P)H-quinone oxidoreductase subunit 3.